The primary structure comprises 346 residues: Methylthioribose-1-phosphate isomerase (346 aa).

Substrate contacts are provided by residues 54–56 (RGA), arginine 91, and glutamine 192. The active-site Proton donor is aspartate 233. 243 to 244 (NK) contacts substrate.

Belongs to the eIF-2B alpha/beta/delta subunits family. MtnA subfamily.

The catalysed reaction is 5-(methylsulfanyl)-alpha-D-ribose 1-phosphate = 5-(methylsulfanyl)-D-ribulose 1-phosphate. It participates in amino-acid biosynthesis; L-methionine biosynthesis via salvage pathway; L-methionine from S-methyl-5-thio-alpha-D-ribose 1-phosphate: step 1/6. Its function is as follows. Catalyzes the interconversion of methylthioribose-1-phosphate (MTR-1-P) into methylthioribulose-1-phosphate (MTRu-1-P). The sequence is that of Methylthioribose-1-phosphate isomerase from Yersinia enterocolitica serotype O:8 / biotype 1B (strain NCTC 13174 / 8081).